The following is a 172-amino-acid chain: Ribosome maturation factor RimM (172 aa).

Residues 95–168 enclose the PRC barrel domain; the sequence is AEGEFYYHQI…RVDVEIMEGL (74 aa).

The protein belongs to the RimM family. In terms of assembly, binds ribosomal protein uS19.

Its subcellular location is the cytoplasm. In terms of biological role, an accessory protein needed during the final step in the assembly of 30S ribosomal subunit, possibly for assembly of the head region. Essential for efficient processing of 16S rRNA. May be needed both before and after RbfA during the maturation of 16S rRNA. It has affinity for free ribosomal 30S subunits but not for 70S ribosomes. The protein is Ribosome maturation factor RimM of Streptococcus equi subsp. zooepidemicus (strain MGCS10565).